The primary structure comprises 80 residues: Teretoxin Tan6.1 (80 aa).

The signal sequence occupies residues 1–21 (MATSGRLLCLCLVLGLVFESL). The propeptide occupies 22 to 34 (GHPGARLPKDGKR).

The protein belongs to the teretoxin M (TM) superfamily. Contains 3 disulfide bonds. As to expression, expressed by the venom duct.

It localises to the secreted. This is Teretoxin Tan6.1 from Terebra anilis (Auger snail).